A 240-amino-acid polypeptide reads, in one-letter code: Probable phosphatase Pcar_2586 (240 aa).

Positions 12, 14, 20, 45, 78, 105, 136, 197, and 199 each coordinate Zn(2+).

This sequence belongs to the PHP family. Zn(2+) serves as cofactor.

The protein is Probable phosphatase Pcar_2586 of Syntrophotalea carbinolica (strain DSM 2380 / NBRC 103641 / GraBd1) (Pelobacter carbinolicus).